The chain runs to 114 residues: uncharacterized protein (114 aa).

A compositionally biased stretch (basic residues) spans 18–29 (TRKRNSHKKVTK). Disordered stretches follow at residues 18–47 (TRKRNSHKKVTKRAVEKRKQDSTRQKRRTG) and 65–108 (SRPR…KLLN). A compositionally biased stretch (basic and acidic residues) spans 30–41 (RAVEKRKQDSTR).

This is an uncharacterized protein from Homo sapiens (Human).